The sequence spans 649 residues: Glycerol-3-phosphate dehydrogenase, mitochondrial (649 aa).

69-97 (DVLIIGGGATGTGVAVDASTRGLNVCLLE) is an FAD binding site.

Belongs to the FAD-dependent glycerol-3-phosphate dehydrogenase family. It depends on FAD as a cofactor.

It is found in the mitochondrion. The catalysed reaction is a quinone + sn-glycerol 3-phosphate = dihydroxyacetone phosphate + a quinol. The protein operates within polyol metabolism; glycerol degradation via glycerol kinase pathway; glycerone phosphate from sn-glycerol 3-phosphate (anaerobic route): step 1/1. This Schizosaccharomyces pombe (strain 972 / ATCC 24843) (Fission yeast) protein is Glycerol-3-phosphate dehydrogenase, mitochondrial (gut2).